The primary structure comprises 223 residues: Ribonuclease 3 (223 aa).

The RNase III domain maps to 3 to 125; it reads LERLQKKLSY…IIAAIYLDAG (123 aa). A Mg(2+)-binding site is contributed by E38. D42 is a catalytic residue. Residues D111 and E114 each coordinate Mg(2+). Residue E114 is part of the active site. Positions 152–222 constitute a DRBM domain; that stretch reads DPKTRLQEFL…AEQVLAKLTT (71 aa).

Belongs to the ribonuclease III family. Homodimer. The cofactor is Mg(2+).

The protein resides in the cytoplasm. The enzyme catalyses Endonucleolytic cleavage to 5'-phosphomonoester.. Its function is as follows. Digests double-stranded RNA. Involved in the processing of primary rRNA transcript to yield the immediate precursors to the large and small rRNAs (23S and 16S). Processes some mRNAs, and tRNAs when they are encoded in the rRNA operon. Processes pre-crRNA and tracrRNA of type II CRISPR loci if present in the organism. This chain is Ribonuclease 3, found in Actinobacillus pleuropneumoniae serotype 5b (strain L20).